Consider the following 362-residue polypeptide: MKESVQRKLESLTERFEEVQALVSQPEIIADQDKYRALTKEYSQLEGVVKCFADYQGAQGDFESAQEMMQESDPEMREMAQEEYKSSKQAIEQYEDELQILLLPKDPNDESNCFIEIRAGAGGDEAAIFAGDLFRMYSRYAEARRWKVEVVTMNEGDHGGYKEVIANIIGDGAYGVLKFESGGHRVQRVPETESQGRIHTSACTVVVMPEVPESEAIEVNKADLKIDTFRASGAGGQHVNKTDSAIRITHVPSGIVVECQDERSQHKNRAKAMAVLQSRLNKLEEEKRQAEETSTRRNLVASGDRSERIRTYNFPQGRVTDHRINLTLYRLDDVVAGDLDAVLEPIRQEHQADLLASLSDEG.

Gln237 is modified (N5-methylglutamine). A compositionally biased stretch (basic and acidic residues) spans 284–295 (EEEKRQAEETST). A disordered region spans residues 284–304 (EEEKRQAEETSTRRNLVASGD).

It belongs to the prokaryotic/mitochondrial release factor family. Post-translationally, methylated by PrmC. Methylation increases the termination efficiency of RF1.

The protein localises to the cytoplasm. Peptide chain release factor 1 directs the termination of translation in response to the peptide chain termination codons UAG and UAA. The polypeptide is Peptide chain release factor 1 (Pseudoalteromonas atlantica (strain T6c / ATCC BAA-1087)).